The primary structure comprises 317 residues: tRNA pseudouridine synthase B (317 aa).

Asp47 serves as the catalytic Nucleophile.

This sequence belongs to the pseudouridine synthase TruB family. Type 1 subfamily.

It carries out the reaction uridine(55) in tRNA = pseudouridine(55) in tRNA. Functionally, responsible for synthesis of pseudouridine from uracil-55 in the psi GC loop of transfer RNAs. The polypeptide is tRNA pseudouridine synthase B (Shewanella denitrificans (strain OS217 / ATCC BAA-1090 / DSM 15013)).